A 292-amino-acid chain; its full sequence is Ribonuclease HIII (292 aa).

Residues 76-292 form the RNase H type-2 domain; it reads TNLIGTDEVG…TQKAMKIAQL (217 aa). A divalent metal cation is bound by residues aspartate 82, glutamate 83, and aspartate 186.

This sequence belongs to the RNase HII family. RnhC subfamily. Mn(2+) is required as a cofactor. Requires Mg(2+) as cofactor.

It is found in the cytoplasm. It catalyses the reaction Endonucleolytic cleavage to 5'-phosphomonoester.. Endonuclease that specifically degrades the RNA of RNA-DNA hybrids. In Lactococcus lactis subsp. cremoris (strain SK11), this protein is Ribonuclease HIII.